The sequence spans 340 residues: DNA-directed RNA polymerase subunit alpha (340 aa).

Positions 1-236 (MLSLSKNWNT…EQLQLFISFE (236 aa)) are alpha N-terminal domain (alpha-NTD). Residues 251 to 340 (FSPYLLKRVD…LSKRYEDSYN (90 aa)) are alpha C-terminal domain (alpha-CTD).

The protein belongs to the RNA polymerase alpha chain family. As to quaternary structure, homodimer. The RNAP catalytic core consists of 2 alpha, 1 beta, 1 beta' and 1 omega subunit. When a sigma factor is associated with the core the holoenzyme is formed, which can initiate transcription.

The catalysed reaction is RNA(n) + a ribonucleoside 5'-triphosphate = RNA(n+1) + diphosphate. Its function is as follows. DNA-dependent RNA polymerase catalyzes the transcription of DNA into RNA using the four ribonucleoside triphosphates as substrates. The polypeptide is DNA-directed RNA polymerase subunit alpha (Rickettsia africae (strain ESF-5)).